A 119-amino-acid chain; its full sequence is Large ribosomal subunit protein uL18 (119 aa).

The protein belongs to the universal ribosomal protein uL18 family. As to quaternary structure, part of the 50S ribosomal subunit; part of the 5S rRNA/L5/L18/L25 subcomplex. Contacts the 5S and 23S rRNAs.

Its function is as follows. This is one of the proteins that bind and probably mediate the attachment of the 5S RNA into the large ribosomal subunit, where it forms part of the central protuberance. The chain is Large ribosomal subunit protein uL18 from Clostridium botulinum (strain 657 / Type Ba4).